A 134-amino-acid chain; its full sequence is Proline-rich protein 4 (134 aa).

The signal sequence occupies residues 1 to 16 (MLLVLLSVVLLALSSA). The tract at residues 28–134 (FTFTIPDVED…ARHPQEQPLW (107 aa)) is disordered. Positions 47 to 59 (QRPPPEGLLPRPP) are enriched in pro residues. Positions 110 to 119 (VSLQEASSFF) are enriched in polar residues. A compositionally biased stretch (basic and acidic residues) spans 120–134 (QRDRPARHPQEQPLW).

Abundantly expressed in lacrimal gland where it is found in the acinar cells but not in the intralobular ducts. Also found in the submandibular gland, the parotid and sublingual glands.

The protein localises to the secreted. The polypeptide is Proline-rich protein 4 (PRR4) (Homo sapiens (Human)).